Here is a 236-residue protein sequence, read N- to C-terminus: C-&gt;U-editing enzyme APOBEC-1 (236 aa).

A CMP/dCMP-type deaminase domain is found at 10 to 134 (GDPTLRRRIE…QQNRQGLRDL (125 aa)). Histidine 61 lines the Zn(2+) pocket. The Proton donor role is filled by glutamate 63. Zn(2+) is bound by residues cysteine 93 and cysteine 96.

This sequence belongs to the cytidine and deoxycytidylate deaminase family. Homodimer. Interacts with A1CF; form an mRNA editing complex. Interacts with RBM47; form an mRNA editing complex. Found in a complex with CELF2/CUGBP2 and A1CF. Interacts with HNRPAB. Interacts with SYNCRIP. The cofactor is Zn(2+). In terms of tissue distribution, expressed exclusively in the small intestine.

It is found in the cytoplasm. The protein resides in the nucleus. The enzyme catalyses a cytidine in mRNA + H2O + H(+) = a uridine in mRNA + NH4(+). The catalysed reaction is cytidine(6666) in apoB mRNA + H2O + H(+) = uridine(6666) in apoB mRNA + NH4(+). Functionally, cytidine deaminase catalyzing the cytidine to uridine postranscriptional editing of a variety of mRNAs. Form complexes with cofactors that confer differential editing activity and selectivity. Responsible for the postranscriptional editing of a CAA codon for Gln to a UAA codon for stop in the apolipoprotein B mRNA. Also involved in CGA (Arg) to UGA (Stop) editing in the NF1 mRNA. May also play a role in the epigenetic regulation of gene expression by participating in DNA demethylation. The polypeptide is C-&gt;U-editing enzyme APOBEC-1 (Homo sapiens (Human)).